The primary structure comprises 636 residues: DNA-dependent metalloprotease SPRTN (636 aa).

The interval 19–42 (QETPAAGWPDEDCPSSKRRRVDPS) is disordered. The SprT-like domain occupies 76 to 183 (RAMFLQFNDK…ASGTNITIYH (108 aa)). A Zn(2+)-binding site is contributed by histidine 141. The active site involves glutamate 142. Residues histidine 145 and histidine 160 each coordinate Zn(2+). 2 disordered regions span residues 238 to 382 (TYTK…GKQR) and 398 to 430 (RGASAVGSSKSSTDASTADYRSNSALDAKPSGK). Residues 241–268 (KIKEPENYGKTGKSDKQRDKMPATEMPK) show a composition bias toward basic and acidic residues. The segment covering 272 to 281 (PPSSTSSSGS) has biased composition (low complexity). The SHP-box signature appears at 290 to 298 (FSGRGFVLG). The span at 302 to 311 (QIPTNKQIQS) shows a compositional bias: polar residues. The span at 313-327 (PKAPPEPLHSPPDSP) shows a compositional bias: pro residues. Residues 341–374 (RLSSGTSNIPRKRSVGNTNAFINVNGSPVRISNG) show a composition bias toward polar residues. Positions 399–416 (GASAVGSSKSSTDASTAD) are enriched in low complexity. A PIP-box motif is present at residues 451-458 (ESNISKYF). A disordered region spans residues 473–608 (TFGSPQKSAI…VRDQQANNPP (136 aa)). Polar residues-rich tracts occupy residues 492-523 (FGSNQRPDSTSSGIRNTGSPQRSHASATSGSS) and 545-554 (SPRTSGTTPS). The Nuclear localization signal signature appears at 535-566 (SNFPSPRNIGSPRTSGTTPSGAKKRSWEEHNS). Composition is skewed to basic and acidic residues over residues 559-570 (RSWEEHNSERVF) and 584-593 (TDKKREEVRS). The UBZ4-type zinc finger occupies 612–636 (TVHCPVCHIRLPESTINDHLDSCLL). Zn(2+) is bound by residues cysteine 615, cysteine 618, histidine 630, and cysteine 634.

The protein belongs to the Spartan family. In terms of assembly, homodimer. Requires Zn(2+) as cofactor. Autocatalytically cleaved in response to double-stranded DNA-binding: autocatalytic cleavage takes place in trans and leads to inactivation.

The protein localises to the nucleus. Its subcellular location is the chromosome. Its activity is regulated as follows. DNA-binding activates the protease activity: single-stranded DNA-binding specifically activates ability to cleave covalent DNA-protein cross-links (DPCs). In contrast, double-stranded DNA-binding specifically activates autocatalytic cleavage, and subsequent inactivation. Its function is as follows. DNA-dependent metalloendopeptidase that mediates the proteolytic cleavage of covalent DNA-protein cross-links (DPCs) during DNA synthesis, thereby playing a key role in maintaining genomic integrity. DPCs are highly toxic DNA lesions that interfere with essential chromatin transactions, such as replication and transcription, and which are induced by reactive agents, such as UV light or formaldehyde. Associates with the DNA replication machinery and specifically removes DPCs during DNA synthesis. Catalyzes proteolytic cleavage of the hmces DNA-protein cross-link following unfolding by the brip1/fancj helicase. Acts as a pleiotropic protease for DNA-binding proteins cross-linked with DNA, such as top1, top2a, histones H3 and H4. Mediates degradation of DPCs that are not ubiquitinated, while it is not able to degrade ubiquitinated DPCs. SPRTN activation requires polymerase collision with DPCs followed by helicase bypass of DPCs. May also act as a 'reader' of ubiquitinated pcna: facilitates chromatin association of rad18 and is required for efficient pcna monoubiquitination, promoting a feed-forward loop to enhance pcna ubiquitination and translesion DNA synthesis. Acts as a regulator of translesion DNA synthesis by recruiting vcp/p97 to sites of DNA damage. This is DNA-dependent metalloprotease SPRTN from Danio rerio (Zebrafish).